Here is a 288-residue protein sequence, read N- to C-terminus: T-lymphocyte activation antigen CD80 (288 aa).

The signal sequence occupies residues Met-1 to Gly-34. Positions Val-35 to Thr-135 constitute an Ig-like V-type domain. Topologically, residues Val-35–Asn-242 are extracellular. Cystine bridges form between Cys-50–Cys-116 and Cys-162–Cys-216. Asn-53, Asn-89, Asn-98, Asn-186, Asn-207, Asn-211, Asn-226, and Asn-232 each carry an N-linked (GlcNAc...) asparagine glycan. In terms of domain architecture, Ig-like C2-type spans Pro-145–Asn-230. A helical membrane pass occupies residues Leu-243–Leu-263. Residues Cys-261, Cys-262, Cys-266, and Cys-271 are each lipidated (S-palmitoyl cysteine). The Cytoplasmic segment spans residues Thr-264–Val-288. Ser-284 carries the phosphoserine modification.

Homodimer. Interacts with CTLA4; this interaction inhibits T-cell activation. Interacts with PDL1/CD274; this interaction blocks PDL1/PDCD1 binding and thus PDL1/CD274 inhibitory function. Interacts with CD28. As to quaternary structure, (Microbial infection) Interacts with adenovirus subgroup B fiber proteins. In terms of assembly, (Microbial infection) Interacts with Orthopoxvirus OPG038/M2 protein, inhibiting the interaction with CTLA4/CD152. Post-translationally, palmitoylated by ZDHHC20; palmitoylation protects CD80 from ubiquitin-mediated degradation, regulating the protein stability, and ensures its accurate plasma membrane localization. As to expression, expressed on activated B-cells, macrophages and dendritic cells.

The protein resides in the cell membrane. Its function is as follows. Costimulatory molecule that belongs to the immunoglobulin superfamily that plays an important role in T-lymphocyte activation. Acts as the primary auxiliary signal augmenting the MHC/TCR signal in naive T-cells together with the CD28 receptor which is constitutively expressed on the cell surface of T-cells. In turn, activates different signaling pathways such as NF-kappa-B or MAPK leading to the production of different cytokines. In addition, CD28/CD80 costimulatory signal stimulates glucose metabolism and ATP synthesis of T-cells by activating the PI3K/Akt signaling pathway. Also acts as a regulator of PDL1/PDCD1 interactions to limit excess engagement of PDL1 and its inhibitory role in immune responses. Expressed on B-cells, plays a critical role in regulating interactions between B-cells and T-cells in both early and late germinal center responses, which are crucial for the generation of effective humoral immune responses. Functionally, (Microbial infection) Acts as a receptor for adenovirus subgroup B. The sequence is that of T-lymphocyte activation antigen CD80 (CD80) from Homo sapiens (Human).